Reading from the N-terminus, the 102-residue chain is NADH-quinone oxidoreductase subunit K (102 aa).

3 consecutive transmembrane segments (helical) span residues 5-25 (ITHY…GIFL), 31-51 (IIIL…FVAF), and 66-86 (FVLT…VVFF).

It belongs to the complex I subunit 4L family. NDH-1 is composed of 14 different subunits. Subunits NuoA, H, J, K, L, M, N constitute the membrane sector of the complex.

It localises to the cell inner membrane. It carries out the reaction a quinone + NADH + 5 H(+)(in) = a quinol + NAD(+) + 4 H(+)(out). Its function is as follows. NDH-1 shuttles electrons from NADH, via FMN and iron-sulfur (Fe-S) centers, to quinones in the respiratory chain. The immediate electron acceptor for the enzyme in this species is believed to be ubiquinone. Couples the redox reaction to proton translocation (for every two electrons transferred, four hydrogen ions are translocated across the cytoplasmic membrane), and thus conserves the redox energy in a proton gradient. This Bartonella grahamii (strain as4aup) protein is NADH-quinone oxidoreductase subunit K.